The following is a 274-amino-acid chain: Cytochrome b-c1 complex subunit Rieske, mitochondrial (274 aa).

Over 79 to 103 (SHTDIKVPDFSDYRRSEVLDTTKSS) the chain is Mitochondrial matrix. The chain crosses the membrane as a helical span at residues 104 to 140 (RESSDARKGFSYLVTATTAVGVTYAAKSIVTQFVSSM). Topologically, residues 141-274 (SASADVLAMS…FTSDDLVIVG (134 aa)) are mitochondrial intermembrane. The region spanning 187-272 (EAAVELSQLR…YEFTSDDLVI (86 aa)) is the Rieske domain. Residues Cys-217, His-219, Cys-236, His-239, and Ser-241 each coordinate [2Fe-2S] cluster. A disulfide bridge connects residues Cys-222 and Cys-238.

This sequence belongs to the Rieske iron-sulfur protein family. In terms of assembly, component of the ubiquinol-cytochrome c oxidoreductase (cytochrome b-c1 complex, complex III, CIII), a multisubunit enzyme composed of 11 subunits. The complex is composed of 3 respiratory subunits cytochrome b, cytochrome c1 and Rieske protein UQCRFS1, 2 core protein subunits UQCRC1/QCR1 and UQCRC2/QCR2, and 6 low-molecular weight protein subunits UQCRH/QCR6, UQCRB/QCR7, UQCRQ/QCR8, UQCR10/QCR9, UQCR11/QCR10 and subunit 9, the cleavage product of Rieske protein UQCRFS1. The complex exists as an obligatory dimer and forms supercomplexes (SCs) in the inner mitochondrial membrane with NADH-ubiquinone oxidoreductase (complex I, CI) and cytochrome c oxidase (complex IV, CIV), resulting in different assemblies (supercomplex SCI(1)III(2)IV(1) and megacomplex MCI(2)III(2)IV(2)). Incorporation of the Rieske protein UQCRFS1 is the penultimate step in complex III assembly. Interacts with TTC19, which is involved in the clearance of UQCRFS1 fragments. As to quaternary structure, component of the ubiquinol-cytochrome c oxidoreductase (cytochrome b-c1 complex, complex III, CIII). Subunit 9 corresponds to the mitochondrial targeting sequence (MTS) of Rieske protein UQCRFS1. It is retained after processing and incorporated inside complex III, where it remains bound to the complex and localizes between the 2 core subunits UQCRC1/QCR1 and UQCRC2/QCR2. Requires [2Fe-2S] cluster as cofactor. Post-translationally, proteolytic processing is necessary for the correct insertion of UQCRFS1 in the complex III dimer. Several fragments are generated during UQCRFS1 insertion, most probably due to the endogenous matrix-processing peptidase (MPP) activity of the 2 core protein subunits UQCRC1/QCR1 and UQCRC2/QCR2, which are homologous to the 2 mitochondrial-processing peptidase (MPP) subunits beta-MPP and alpha-MPP respectively. The action of the protease is also necessary for the clearance of the UQCRFS1 fragments.

It is found in the mitochondrion inner membrane. The catalysed reaction is a quinol + 2 Fe(III)-[cytochrome c](out) = a quinone + 2 Fe(II)-[cytochrome c](out) + 2 H(+)(out). Its function is as follows. Component of the ubiquinol-cytochrome c oxidoreductase, a multisubunit transmembrane complex that is part of the mitochondrial electron transport chain which drives oxidative phosphorylation. The respiratory chain contains 3 multisubunit complexes succinate dehydrogenase (complex II, CII), ubiquinol-cytochrome c oxidoreductase (cytochrome b-c1 complex, complex III, CIII) and cytochrome c oxidase (complex IV, CIV), that cooperate to transfer electrons derived from NADH and succinate to molecular oxygen, creating an electrochemical gradient over the inner membrane that drives transmembrane transport and the ATP synthase. The cytochrome b-c1 complex catalyzes electron transfer from ubiquinol to cytochrome c, linking this redox reaction to translocation of protons across the mitochondrial inner membrane, with protons being carried across the membrane as hydrogens on the quinol. In the process called Q cycle, 2 protons are consumed from the matrix, 4 protons are released into the intermembrane space and 2 electrons are passed to cytochrome c. The Rieske protein is a catalytic core subunit containing a [2Fe-2S] iron-sulfur cluster. It cycles between 2 conformational states during catalysis to transfer electrons from the quinol bound in the Q(0) site in cytochrome b to cytochrome c1. Incorporation of UQCRFS1 is the penultimate step in complex III assembly. Functionally, component of the ubiquinol-cytochrome c oxidoreductase (cytochrome b-c1 complex, complex III, CIII). UQCRFS1 undergoes proteolytic processing once it is incorporated in the complex III dimer. One of the fragments, called subunit 9, corresponds to its mitochondrial targeting sequence (MTS). The proteolytic processing is necessary for the correct insertion of UQCRFS1 in the complex III dimer, but the persistence of UQCRFS1-derived fragments may prevent newly imported UQCRFS1 to be processed and assembled into complex III and is detrimental for the complex III structure and function. The polypeptide is Cytochrome b-c1 complex subunit Rieske, mitochondrial (UQCRFS1) (Aotus azarae (Azara's night monkey)).